The primary structure comprises 100 residues: Guanine nucleotide exchange factor MSS4 homolog (100 aa).

Residues methionine 1 to asparagine 100 form the MSS4 domain. Residues cysteine 8, cysteine 11, cysteine 73, and cysteine 76 each contribute to the Zn(2+) site.

The protein belongs to the DSS4/MSS4 family.

In terms of biological role, guanine-nucleotide-releasing protein that acts on members of the sec4/ypt1/rab subfamily. This Schizosaccharomyces pombe (strain 972 / ATCC 24843) (Fission yeast) protein is Guanine nucleotide exchange factor MSS4 homolog.